The primary structure comprises 439 residues: COBRA-like protein 7 (439 aa).

An N-terminal signal peptide occupies residues Met-1–Ala-22. Asn-138, Asn-181, Asn-186, Asn-232, Asn-312, and Asn-346 each carry an N-linked (GlcNAc...) asparagine glycan. Asn-412 carries GPI-anchor amidated asparagine lipidation. A propeptide spans Gly-413 to Met-439 (removed in mature form).

It belongs to the COBRA family.

It is found in the cell membrane. In terms of biological role, involved in determining the orientation of cell expansion, probably by playing an important role in cellulose deposition. May act by recruiting cellulose synthesizing complexes to discrete positions on the cell surface. In Oryza sativa subsp. japonica (Rice), this protein is COBRA-like protein 7 (BC1LP1).